The sequence spans 78 residues: Large ribosomal subunit protein bL28 (78 aa).

The segment at M1–L33 is disordered. A compositionally biased stretch (polar residues) spans T14 to K24.

The protein belongs to the bacterial ribosomal protein bL28 family.

This is Large ribosomal subunit protein bL28 from Salinibacter ruber (strain DSM 13855 / M31).